A 329-amino-acid polypeptide reads, in one-letter code: Phosphate import ATP-binding protein PstB (329 aa).

Positions 83 to 325 (FEIENLNFWY…PKQKETNRYI (243 aa)) constitute an ABC transporter domain. An ATP-binding site is contributed by 116–123 (GKSGCGKS).

This sequence belongs to the ABC transporter superfamily. Phosphate importer (TC 3.A.1.7) family. In terms of assembly, the complex is composed of two ATP-binding proteins (PstB), two transmembrane proteins (PstC and PstA) and a solute-binding protein (PstS).

It is found in the cell membrane. It catalyses the reaction phosphate(out) + ATP + H2O = ADP + 2 phosphate(in) + H(+). Its function is as follows. Part of the ABC transporter complex PstSACB involved in phosphate import. Responsible for energy coupling to the transport system. The sequence is that of Phosphate import ATP-binding protein PstB from Mycoplasma pneumoniae (strain ATCC 29342 / M129 / Subtype 1) (Mycoplasmoides pneumoniae).